Reading from the N-terminus, the 72-residue chain is Protein CYSTEINE-RICH TRANSMEMBRANE MODULE 1 (72 aa).

Residues 1–11 (MSQYDHNQSAG) are compositionally biased toward polar residues. Positions 1 to 46 (MSQYDHNQSAGANPPPPMSTCTSPPPPIGYPTNQPSHGSVAQGKVE) are disordered. Residues 13–29 (NPPPPMSTCTSPPPPIG) show a composition bias toward pro residues. The chain crosses the membrane as a helical span at residues 49 to 65 (SKGDGFFKGCLAAMCCC).

Belongs to the CYSTM1 family. In terms of assembly, heterodimers. Binds weakly to CYSTM7 and WIH1/CYSTM13. Mostly expressed in roots, flowers and siliques and, to a lower extent, in stems and leaves.

It is found in the cell membrane. The protein localises to the nucleus. Its function is as follows. May be involved in aluminium (Al) tolerance. Involved in resistance to abiotic stress. The protein is Protein CYSTEINE-RICH TRANSMEMBRANE MODULE 1 of Arabidopsis thaliana (Mouse-ear cress).